The primary structure comprises 211 residues: Claudin-7 (211 aa).

The Cytoplasmic portion of the chain corresponds to 1–7 (MANSGLQ). The helical transmembrane segment at 8–28 (LLGFSMAMLGWVGLIASTAIP) threads the bilayer. Topologically, residues 29 to 81 (QWQMSSYAGDNIITAQAMYKGLWMECVTQSTGMMSCKMYDSVLALPAATQATR) are extracellular. A helical transmembrane segment spans residues 82–102 (ALMIVSLVLGFLAMFVATMGM). Residues 103-119 (KCTRCGGDDKVKKARIA) lie on the Cytoplasmic side of the membrane. A helical membrane pass occupies residues 120–140 (MTGGIIFIVAGLAALVACSWI). The Extracellular segment spans residues 141 to 160 (GHQIVTDFYNPLTPMNIKYE). The helical transmembrane segment at 161 to 181 (FGPAIFIGWAGSALVLLGGAL) threads the bilayer. Residues 182–211 (LSCSCPGSESKAAYRAPRSYPKSNSSKEYV) lie on the Cytoplasmic side of the membrane. The interval 210–211 (YV) is interactions with TJP1, TJP2 and TJP3.

It belongs to the claudin family. In terms of assembly, directly interacts with TJP1/ZO-1, TJP2/ZO-2 and TJP3/ZO-3. The phosphorylated form interacts with EPCAM. Phosphorylated.

Its subcellular location is the cell membrane. The protein localises to the basolateral cell membrane. It is found in the cell junction. The protein resides in the tight junction. In terms of biological role, plays a major role in tight junction-specific obliteration of the intercellular space. The protein is Claudin-7 (Cldn7) of Rattus norvegicus (Rat).